The sequence spans 62 residues: uncharacterized protein (62 aa).

Residues 37 to 57 (FILGVILLGVIIESITLLVVY) form a helical membrane-spanning segment.

The protein localises to the membrane. This is an uncharacterized protein from Dictyostelium discoideum (Social amoeba).